The primary structure comprises 287 residues: Elongation factor Ts (287 aa).

Residues 80 to 83 form an involved in Mg(2+) ion dislocation from EF-Tu region; that stretch reads TDFL.

It belongs to the EF-Ts family.

It is found in the cytoplasm. Functionally, associates with the EF-Tu.GDP complex and induces the exchange of GDP to GTP. It remains bound to the aminoacyl-tRNA.EF-Tu.GTP complex up to the GTP hydrolysis stage on the ribosome. This Pseudomonas syringae pv. syringae (strain B728a) protein is Elongation factor Ts.